Reading from the N-terminus, the 142-residue chain is Succinate dehydrogenase subunit 6, mitochondrial (142 aa).

Gly-2 bears the N-acetylglycine mark.

Component of complex II composed of eight subunits in plants: four classical SDH subunits SDH1, SDH2, SDH3 and SDH4 (a flavoprotein (FP), an iron-sulfur protein (IP), and a cytochrome b composed of a large and a small subunit.), as well as four subunits unknown in mitochondria from bacteria and heterotrophic eukaryotes.

Its subcellular location is the mitochondrion inner membrane. The protein operates within carbohydrate metabolism; tricarboxylic acid cycle. The polypeptide is Succinate dehydrogenase subunit 6, mitochondrial (Arabidopsis thaliana (Mouse-ear cress)).